The primary structure comprises 85 residues: Small ribosomal subunit protein bS20 (85 aa).

Belongs to the bacterial ribosomal protein bS20 family.

In terms of biological role, binds directly to 16S ribosomal RNA. This Cytophaga hutchinsonii (strain ATCC 33406 / DSM 1761 / CIP 103989 / NBRC 15051 / NCIMB 9469 / D465) protein is Small ribosomal subunit protein bS20.